The primary structure comprises 405 residues: Argininosuccinate synthase (405 aa).

Residues 10-18 and Ala-37 contribute to the ATP site; that span reads AYSGGLDTS. L-citrulline contacts are provided by Tyr-88 and Ser-93. An ATP-binding site is contributed by Gly-118. Residues Thr-120, Asn-124, and Asp-125 each contribute to the L-aspartate site. Asn-124 provides a ligand contact to L-citrulline. The L-citrulline site is built by Arg-128, Ser-179, Ser-188, Glu-264, and Tyr-276.

Belongs to the argininosuccinate synthase family. Type 1 subfamily. In terms of assembly, homotetramer.

The protein localises to the cytoplasm. The catalysed reaction is L-citrulline + L-aspartate + ATP = 2-(N(omega)-L-arginino)succinate + AMP + diphosphate + H(+). It participates in amino-acid biosynthesis; L-arginine biosynthesis; L-arginine from L-ornithine and carbamoyl phosphate: step 2/3. The protein is Argininosuccinate synthase of Stutzerimonas stutzeri (strain A1501) (Pseudomonas stutzeri).